The sequence spans 54 residues: Ovomucoid (54 aa).

Residues 4-54 (VDCSDYPKPVCSLEYMPLCGSDSKTYSNKCDFCNAFVDSNGTLSLSHFGKC) form the Kazal-like domain. 3 cysteine pairs are disulfide-bonded: cysteine 6-cysteine 36, cysteine 14-cysteine 33, and cysteine 22-cysteine 54. N-linked (GlcNAc...) asparagine glycosylation is present at asparagine 43.

It is found in the secreted. This is Ovomucoid from Circus aeruginosus (Western marsh harrier).